The sequence spans 118 residues: DNA-binding protein Msp_0595 (118 aa).

Residues 15-44 show a composition bias toward low complexity; it reads LKQQQLAAQQQQGASLEQMQQEEQARQQFE. Residues 15-45 are disordered; that stretch reads LKQQQLAAQQQQGASLEQMQQEEQARQQFEN.

It belongs to the PDCD5 family.

This is DNA-binding protein Msp_0595 from Methanosphaera stadtmanae (strain ATCC 43021 / DSM 3091 / JCM 11832 / MCB-3).